We begin with the raw amino-acid sequence, 66 residues long: Large ribosomal subunit protein bL32 (66 aa).

Positions 1 to 18 (MAIVPKRKTSKQRKHKRR) are enriched in basic residues. Residues 1 to 21 (MAIVPKRKTSKQRKHKRRTND) are disordered.

The protein belongs to the bacterial ribosomal protein bL32 family.

The chain is Large ribosomal subunit protein bL32 from Mycoplasmopsis agalactiae (strain NCTC 10123 / CIP 59.7 / PG2) (Mycoplasma agalactiae).